A 957-amino-acid polypeptide reads, in one-letter code: Glycine dehydrogenase (decarboxylating) (957 aa).

The residue at position 708 (Lys708) is an N6-(pyridoxal phosphate)lysine.

Belongs to the GcvP family. As to quaternary structure, the glycine cleavage system is composed of four proteins: P, T, L and H. Requires pyridoxal 5'-phosphate as cofactor.

The enzyme catalyses N(6)-[(R)-lipoyl]-L-lysyl-[glycine-cleavage complex H protein] + glycine + H(+) = N(6)-[(R)-S(8)-aminomethyldihydrolipoyl]-L-lysyl-[glycine-cleavage complex H protein] + CO2. Its function is as follows. The glycine cleavage system catalyzes the degradation of glycine. The P protein binds the alpha-amino group of glycine through its pyridoxal phosphate cofactor; CO(2) is released and the remaining methylamine moiety is then transferred to the lipoamide cofactor of the H protein. This chain is Glycine dehydrogenase (decarboxylating), found in Escherichia coli (strain UTI89 / UPEC).